Here is a 469-residue protein sequence, read N- to C-terminus: tRNA-2-methylthio-N(6)-dimethylallyladenosine synthase (469 aa).

Positions 27–142 (KKVYIRTFGC…LPQMLAQRAR (116 aa)) constitute an MTTase N-terminal domain. Residues Cys-36, Cys-73, Cys-105, Cys-179, Cys-183, and Cys-186 each coordinate [4Fe-4S] cluster. Positions 165–398 (KVDGAAAFVS…QATIEDNVRR (234 aa)) constitute a Radical SAM core domain. The TRAM domain maps to 401 to 467 (ERRVGTVQRV…PHSLRGEPVL (67 aa)).

This sequence belongs to the methylthiotransferase family. MiaB subfamily. In terms of assembly, monomer. [4Fe-4S] cluster is required as a cofactor.

It localises to the cytoplasm. It catalyses the reaction N(6)-dimethylallyladenosine(37) in tRNA + (sulfur carrier)-SH + AH2 + 2 S-adenosyl-L-methionine = 2-methylsulfanyl-N(6)-dimethylallyladenosine(37) in tRNA + (sulfur carrier)-H + 5'-deoxyadenosine + L-methionine + A + S-adenosyl-L-homocysteine + 2 H(+). Catalyzes the methylthiolation of N6-(dimethylallyl)adenosine (i(6)A), leading to the formation of 2-methylthio-N6-(dimethylallyl)adenosine (ms(2)i(6)A) at position 37 in tRNAs that read codons beginning with uridine. The polypeptide is tRNA-2-methylthio-N(6)-dimethylallyladenosine synthase (Leptothrix cholodnii (strain ATCC 51168 / LMG 8142 / SP-6) (Leptothrix discophora (strain SP-6))).